We begin with the raw amino-acid sequence, 376 residues long: MPRPIHASISLAALAHNLDVVRRHLDQAAQAAGGAPPSIWAVIKANAYGHGIEAAVAGFSAAQGLAMLDLAEAVRCREAGWGGPILLLEGFFQPADLDLIDRYHLSATVHTREQLDMLAQARLSRRVDIMLKLNSGMNRLGFDPDAYGSAHARALQLREQGVVGAVGRMTHFACADGTPGVAGQLRVFQSVTQGLADGPVSVCNSAATLRYPEIAVAHGAQAHWVRPGICLYGASPFADADAASFGLRPAMSLRSQIIGVQDLPAGAEVGYGATFRAERPMRVGVVACGYADGYPRHAGTGTPVVVGGVRTRLVGRVSMDMLMVDLDPVPAAGIGTPVSLWGQDGPSVDEVAQAAGTIGYELLCALAPRVPVKRDS.

Lysine 44 (proton acceptor; specific for D-alanine) is an active-site residue. The residue at position 44 (lysine 44) is an N6-(pyridoxal phosphate)lysine. Position 139 (arginine 139) interacts with substrate. The active-site Proton acceptor; specific for L-alanine is the tyrosine 271. Methionine 319 provides a ligand contact to substrate.

Belongs to the alanine racemase family. Requires pyridoxal 5'-phosphate as cofactor.

It catalyses the reaction L-alanine = D-alanine. Its pathway is amino-acid biosynthesis; D-alanine biosynthesis; D-alanine from L-alanine: step 1/1. Its function is as follows. Catalyzes the interconversion of L-alanine and D-alanine. May also act on other amino acids. The polypeptide is Alanine racemase (alr) (Bordetella petrii (strain ATCC BAA-461 / DSM 12804 / CCUG 43448)).